Consider the following 536-residue polypeptide: Xylulose kinase (536 aa).

Substrate-binding residues include H99, R170, D280, and N281. Residues W355, 441–442 (GA), and N445 contribute to the ATP site.

It belongs to the FGGY kinase family. As to quaternary structure, monomer.

The enzyme catalyses D-xylulose + ATP = D-xylulose 5-phosphate + ADP + H(+). Phosphorylates D-xylulose to produce D-xylulose 5-phosphate, a molecule that may play an important role in the regulation of glucose metabolism and lipogenesis. The sequence is that of Xylulose kinase (XYLB) from Homo sapiens (Human).